Here is a 217-residue protein sequence, read N- to C-terminus: Large ribosomal subunit protein uL4 (217 aa).

Positions 58-90 (TAATKGRSDVSGGGKKPWRQKGTGRARSGTSRS) are disordered.

The protein belongs to the universal ribosomal protein uL4 family. As to quaternary structure, part of the 50S ribosomal subunit.

In terms of biological role, one of the primary rRNA binding proteins, this protein initially binds near the 5'-end of the 23S rRNA. It is important during the early stages of 50S assembly. It makes multiple contacts with different domains of the 23S rRNA in the assembled 50S subunit and ribosome. Its function is as follows. Forms part of the polypeptide exit tunnel. In Syntrophus aciditrophicus (strain SB), this protein is Large ribosomal subunit protein uL4.